We begin with the raw amino-acid sequence, 218 residues long: UPF0711 protein C18orf21 homolog (218 aa).

At Ser-126 the chain carries Phosphoserine. Positions 130-146 (ASAASKASPKTPKRAAA) are enriched in low complexity. The tract at residues 130-192 (ASAASKASPK…NGSKRKKHFS (63 aa)) is disordered. Thr-140 carries the phosphothreonine modification. Over residues 147–156 (GSTNISQSVH) the composition is skewed to polar residues. Low complexity predominate over residues 161-172 (RSPSSTVRTPTS). Residues 173 to 183 (GQSTPICSSRN) are compositionally biased toward polar residues.

Belongs to the UPF0711 family.

The chain is UPF0711 protein C18orf21 homolog from Rattus norvegicus (Rat).